The primary structure comprises 352 residues: Large ribosomal subunit protein uL10 (352 aa).

A compositionally biased stretch (acidic residues) spans 286 to 297 (DDEDALPEELQD). The disordered stretch occupies residues 286–352 (DDEDALPEEL…GAEGLGEMFG (67 aa)). Residues 299–310 (DAPAAPAGGEAD) show a composition bias toward low complexity. The span at 324–340 (EADDADDSDDDDDDDDG) shows a compositional bias: acidic residues. Over residues 343–352 (GAEGLGEMFG) the composition is skewed to gly residues.

It belongs to the universal ribosomal protein uL10 family. As to quaternary structure, part of the 50S ribosomal subunit. Forms part of the ribosomal stalk which helps the ribosome interact with GTP-bound translation factors. Forms a heptameric L10(L12)2(L12)2(L12)2 complex, where L10 forms an elongated spine to which the L12 dimers bind in a sequential fashion.

Functionally, forms part of the ribosomal stalk, playing a central role in the interaction of the ribosome with GTP-bound translation factors. The protein is Large ribosomal subunit protein uL10 of Halobacterium salinarum (strain ATCC 700922 / JCM 11081 / NRC-1) (Halobacterium halobium).